A 383-amino-acid chain; its full sequence is Dual-specificity RNA methyltransferase RlmN (383 aa).

The Proton acceptor role is filled by E95. One can recognise a Radical SAM core domain in the interval E101 to D349. An intrachain disulfide couples C108 to C354. [4Fe-4S] cluster contacts are provided by C115, C119, and C122. S-adenosyl-L-methionine is bound by residues G180–E181, S212, S234–H236, and N311. The S-methylcysteine intermediate role is filled by C354.

It belongs to the radical SAM superfamily. RlmN family. [4Fe-4S] cluster is required as a cofactor.

It is found in the cytoplasm. The catalysed reaction is adenosine(2503) in 23S rRNA + 2 reduced [2Fe-2S]-[ferredoxin] + 2 S-adenosyl-L-methionine = 2-methyladenosine(2503) in 23S rRNA + 5'-deoxyadenosine + L-methionine + 2 oxidized [2Fe-2S]-[ferredoxin] + S-adenosyl-L-homocysteine. It carries out the reaction adenosine(37) in tRNA + 2 reduced [2Fe-2S]-[ferredoxin] + 2 S-adenosyl-L-methionine = 2-methyladenosine(37) in tRNA + 5'-deoxyadenosine + L-methionine + 2 oxidized [2Fe-2S]-[ferredoxin] + S-adenosyl-L-homocysteine. Its function is as follows. Specifically methylates position 2 of adenine 2503 in 23S rRNA and position 2 of adenine 37 in tRNAs. m2A2503 modification seems to play a crucial role in the proofreading step occurring at the peptidyl transferase center and thus would serve to optimize ribosomal fidelity. The polypeptide is Dual-specificity RNA methyltransferase RlmN (Paraburkholderia phytofirmans (strain DSM 17436 / LMG 22146 / PsJN) (Burkholderia phytofirmans)).